Here is an 89-residue protein sequence, read N- to C-terminus: Small ribosomal subunit protein uS15 (89 aa).

It belongs to the universal ribosomal protein uS15 family. Part of the 30S ribosomal subunit. Forms a bridge to the 50S subunit in the 70S ribosome, contacting the 23S rRNA.

Its function is as follows. One of the primary rRNA binding proteins, it binds directly to 16S rRNA where it helps nucleate assembly of the platform of the 30S subunit by binding and bridging several RNA helices of the 16S rRNA. Forms an intersubunit bridge (bridge B4) with the 23S rRNA of the 50S subunit in the ribosome. This Thiobacillus denitrificans (strain ATCC 25259 / T1) protein is Small ribosomal subunit protein uS15.